A 415-amino-acid chain; its full sequence is Imidazolonepropionase (415 aa).

Fe(3+) is bound by residues histidine 76 and histidine 78. Zn(2+)-binding residues include histidine 76 and histidine 78. Arginine 85, tyrosine 148, and histidine 181 together coordinate 4-imidazolone-5-propanoate. Tyrosine 148 contributes to the N-formimidoyl-L-glutamate binding site. Residue histidine 246 coordinates Fe(3+). Histidine 246 lines the Zn(2+) pocket. Glutamate 249 lines the 4-imidazolone-5-propanoate pocket. Aspartate 320 is a Fe(3+) binding site. Aspartate 320 is a binding site for Zn(2+). Positions 322 and 324 each coordinate N-formimidoyl-L-glutamate. A 4-imidazolone-5-propanoate-binding site is contributed by threonine 325.

It belongs to the metallo-dependent hydrolases superfamily. HutI family. Zn(2+) serves as cofactor. It depends on Fe(3+) as a cofactor.

It localises to the cytoplasm. It catalyses the reaction 4-imidazolone-5-propanoate + H2O = N-formimidoyl-L-glutamate. It participates in amino-acid degradation; L-histidine degradation into L-glutamate; N-formimidoyl-L-glutamate from L-histidine: step 3/3. Its function is as follows. Catalyzes the hydrolytic cleavage of the carbon-nitrogen bond in imidazolone-5-propanoate to yield N-formimidoyl-L-glutamate. It is the third step in the universal histidine degradation pathway. The chain is Imidazolonepropionase from Caldanaerobacter subterraneus subsp. tengcongensis (strain DSM 15242 / JCM 11007 / NBRC 100824 / MB4) (Thermoanaerobacter tengcongensis).